Reading from the N-terminus, the 233-residue chain is Orotate phosphoribosyltransferase (233 aa).

Position 29 (lysine 29) interacts with 5-phospho-alpha-D-ribose 1-diphosphate. An orotate-binding site is contributed by 37-38; sequence FF. 5-phospho-alpha-D-ribose 1-diphosphate-binding positions include 79-80, arginine 109, lysine 110, lysine 113, histidine 115, and 135-143; these read YK and DDVITAGTA. Residues threonine 139 and arginine 167 each contribute to the orotate site.

The protein belongs to the purine/pyrimidine phosphoribosyltransferase family. PyrE subfamily. Homodimer.

It carries out the reaction orotidine 5'-phosphate + diphosphate = orotate + 5-phospho-alpha-D-ribose 1-diphosphate. Its pathway is pyrimidine metabolism; UMP biosynthesis via de novo pathway; UMP from orotate: step 1/2. Catalyzes the transfer of a ribosyl phosphate group from 5-phosphoribose 1-diphosphate to orotate, leading to the formation of orotidine monophosphate (OMP). This chain is Orotate phosphoribosyltransferase (ura-5), found in Neurospora crassa (strain ATCC 24698 / 74-OR23-1A / CBS 708.71 / DSM 1257 / FGSC 987).